Reading from the N-terminus, the 425-residue chain is Glutamate-1-semialdehyde 2,1-aminomutase (425 aa).

An N6-(pyridoxal phosphate)lysine modification is found at Lys266.

This sequence belongs to the class-III pyridoxal-phosphate-dependent aminotransferase family. HemL subfamily. As to quaternary structure, homodimer. It depends on pyridoxal 5'-phosphate as a cofactor.

It is found in the cytoplasm. It catalyses the reaction (S)-4-amino-5-oxopentanoate = 5-aminolevulinate. It participates in porphyrin-containing compound metabolism; protoporphyrin-IX biosynthesis; 5-aminolevulinate from L-glutamyl-tRNA(Glu): step 2/2. This chain is Glutamate-1-semialdehyde 2,1-aminomutase, found in Nitratidesulfovibrio vulgaris (strain DSM 19637 / Miyazaki F) (Desulfovibrio vulgaris).